Consider the following 2017-residue polypeptide: Protein cbp-1 (2017 aa).

The segment covering 1–13 (MDEPPSKKSRADS) has biased composition (basic and acidic residues). The segment at 1–182 (MDEPPSKKSR…PGMFQGDQQQ (182 aa)) is disordered. 2 stretches are compositionally biased toward low complexity: residues 21 to 30 (ALSALESLEA) and 78 to 90 (QPGQSQPQQPPQN). Positions 106–116 (NPSQTSNNSPR) are enriched in polar residues. Low complexity predominate over residues 141-151 (MMSPPSMGRVP). Residues 152–164 (GPSPGGPQPPGPG) are compositionally biased toward pro residues. The segment covering 165–182 (QPQMRPGQPGMFQGDQQQ) has biased composition (low complexity). Position 234 is a symmetric dimethylarginine; by PRMT5; in vitro (Arg234). The disordered stretch occupies residues 307–398 (SNGQPIRGPN…PGSSMLATHQ (92 aa)). Residues 340–379 (QAAAAQHAAQQQAAAQAQAQAAAQQQQQQQREQEAAAAAQ) are compositionally biased toward low complexity. The segment at 399–505 (DPEKRKLIQQ…REDCPVCKPL (107 aa)) adopts a TAZ-type 1 zinc-finger fold. 2 disordered regions span residues 558–593 (EGFNGNPFQNGPNRGGPRPPGGNGEIPNLPPPDMPD) and 706–864 (GRSD…DTVF). The span at 559-573 (GFNGNPFQNGPNRGG) shows a compositional bias: low complexity. The KIX domain maps to 593-672 (DCTKEWHHQV…KIYKIQKELQ (80 aa)). Positions 721-773 (PSQQNQPWGGAPNSNMHQQIPPNGQVPQVNNSSTFPSSGNSTPNIGASSTVSA) are enriched in polar residues. The span at 834-854 (KDTKDGVAESKPKEQQAKREP) shows a compositional bias: basic and acidic residues. A Bromo domain is found at 864–970 (FSQEDLIKFL…EMFVSEMDPV (107 aa)). 2 interaction with histone regions span residues 902–948 (DYHE…YNRK) and 1224–1226 (YLD). In terms of domain architecture, CBP/p300-type HAT spans 1112–1492 (KYLASKLPHN…LAYSLHETDS (381 aa)). Acetyl-CoA-binding positions include 1225 to 1227 (LDS), 1237 to 1238 (RT), Ile1284, Arg1289, and Trp1293. A compositionally biased stretch (basic and acidic residues) spans 1349 to 1358 (NEEAQRKVKE). The disordered stretch occupies residues 1349–1401 (NEEAQRKVKEDDDDGEDADGGLGGGDSGKKKSSKNKKNNLKKNAKMNKKKAGS). A compositionally biased stretch (basic residues) spans 1378–1399 (KKSSKNKKNNLKKNAKMNKKKA). A ZZ-type zinc finger spans residues 1494–1540 (GMEYTCNKCSSPAVWHCQSCDDFDLCDGCKPTTQHPHEMEKIKSLIG). Residues Cys1499, Cys1502, Cys1510, Cys1513, Cys1519, Cys1522, His1528, and His1530 each coordinate Zn(2+). A TAZ-type 2 zinc finger spans residues 1550-1631 (GGTRYESIQR…ACTVPFCMNI (82 aa)). Disordered stretches follow at residues 1656–1828 (GLQS…QPVR) and 1908–2017 (SQMS…AGGQ). The segment covering 1667–1678 (TPSTVSNGTPSN) has biased composition (polar residues). Low complexity predominate over residues 1699-1708 (QVQMQQHQGS). Residues 1748 to 1757 (PQMNANQSRY) are compositionally biased toward polar residues. Composition is skewed to low complexity over residues 1793–1812 (MNPQQQPQQQQGHPGLQNPG) and 1908–1932 (SQMSMGSSNLQNLQQQQLQQQQAGA). Over residues 1943-1962 (QNNSQPRAPSGQFASMNPSM) the composition is skewed to polar residues. Residues 1963-2017 (QQQYPQQQQGWPQQRQQNPGGMQQNANPYNQFQNRQNMMMMPQQQQPHPSNAGGQ) are compositionally biased toward low complexity.

As to quaternary structure, interacts (via N-terminus domain and HAT domain) with prmt-5; the interaction results in methylation of cbp-1. Interacts (via HAT domain) with cep-1; cep-1 transcriptional activity may be inhibited by interaction with methylated cbp-1. Component of a complex that contains prmt-5 and cbp-1. In terms of processing, methylation by prmt-5 may repress the capacity of cbp-1 to enhance cep-1-dependent transcription of egl-1.

The protein localises to the nucleus. The catalysed reaction is L-lysyl-[protein] + acetyl-CoA = N(6)-acetyl-L-lysyl-[protein] + CoA + H(+). Functionally, acetyltransferase enzyme. Acetylates histones, giving a specific tag for transcriptional activation. May prevent DNA damage-induced apoptosis by inhibiting cep-1-dependent transcription activation of the programmed cell death activator egl-1. In differentiated cells, negatively regulates localization of heterochromatin to the nuclear periphery. Plays a role in migration of gonadal distal tip cells, where it probably modulates expression of genes involved in integrin-mediated adhesion. The chain is Protein cbp-1 (cbp-1) from Caenorhabditis elegans.